A 577-amino-acid chain; its full sequence is Moesin (577 aa).

The region spanning 2-295 (PKTINVRVTT…GNHELYMRRR (294 aa)) is the FERM domain. Ser-74 is modified (phosphoserine). An N6-acetyllysine modification is found at Lys-79. Residue Lys-83 is modified to N6-succinyllysine. Residues 115 to 120 (IYCPPE) carry the [IL]-x-C-x-x-[DE] motif motif. At Tyr-116 the chain carries Phosphotyrosine. At Cys-117 the chain carries S-nitrosocysteine. 2 positions are modified to N6-acetyllysine: Lys-139 and Lys-165. The span at 375-401 (LEQERKRAQSEAEKLAKERQEAEEAKE) shows a compositional bias: basic and acidic residues. Disordered regions lie at residues 375–409 (LEQE…ASQD) and 466–518 (AMST…NERV). Ser-407 is modified (phosphoserine). The segment covering 476–487 (AENEQDEQDENG) has biased composition (acidic residues). A compositionally biased stretch (basic and acidic residues) spans 492-518 (AELRADAMAKDRSEEERTTEAEKNERV). Ser-527 is subject to Phosphoserine. Position 558 is a phosphothreonine; by ROCK2 and STK10 (Thr-558).

In terms of assembly, in resting T-cells, part of a PAG1-NHERF1-MSN complex which is disrupted upon TCR activation. Interacts with NHERF1. Interacts with PPP1R16B. Interacts with PDZD8. Interacts with SELPLG and SYK; these interactions mediate the activation of SYK by SELPLG. Interacts with PDPN (via cytoplasmic domain); this interaction activates RHOA and promotes epithelial-mesenchymal transition. Interacts with SPN/CD43 cytoplasmic tail. Interacts with CD44. Interacts with ICAM2. Interacts with ICAM3 (via C-terminus). Interacts with PDZD8. Interacts with F-actin. Interacts with CD46. Interacts with PTPN6. Phosphorylation on Thr-558 is crucial for the formation of microvilli-like structures. Phosphorylation by ROCK2 suppresses the head-to-tail association of the N-terminal and C-terminal halves resulting in an opened conformation which is capable of actin and membrane-binding. Phosphorylation on Thr-558 by STK10 negatively regulates lymphocyte migration and polarization. In terms of processing, S-nitrosylation of Cys-117 is induced by interferon-gamma and oxidatively-modified low-densitity lipoprotein (LDL(ox)) implicating the iNOS-S100A8/9 transnitrosylase complex.

Its subcellular location is the cell membrane. The protein localises to the cytoplasm. The protein resides in the cytoskeleton. It is found in the apical cell membrane. It localises to the cell projection. Its subcellular location is the microvillus membrane. The protein localises to the microvillus. Its activity is regulated as follows. A head-to-tail association, of the N-terminal and C-terminal halves results in a closed conformation (inactive form) which is incapable of actin or membrane-binding. Its function is as follows. Ezrin-radixin-moesin (ERM) family protein that connects the actin cytoskeleton to the plasma membrane and thereby regulates the structure and function of specific domains of the cell cortex. Tethers actin filaments by oscillating between a resting and an activated state providing transient interactions between moesin and the actin cytoskeleton. Once phosphorylated on its C-terminal threonine, moesin is activated leading to interaction with F-actin and cytoskeletal rearrangement. These rearrangements regulate many cellular processes, including cell shape determination, membrane transport, and signal transduction. The role of moesin is particularly important in immunity acting on both T and B-cells homeostasis and self-tolerance, regulating lymphocyte egress from lymphoid organs. Modulates phagolysosomal biogenesis in macrophages. Participates also in immunologic synapse formation. The chain is Moesin from Bos taurus (Bovine).